The chain runs to 345 residues: OVARIAN TUMOR DOMAIN-containing deubiquitinating enzyme 9 (345 aa).

Residues 204–328 (LVENKIEGDG…EVHYNSIYPE (125 aa)) enclose the OTU domain. Residue Asp212 is part of the active site. Residue Cys215 is the Nucleophile of the active site. His321 is an active-site residue.

This sequence belongs to the peptidase C85 family.

The enzyme catalyses Thiol-dependent hydrolysis of ester, thioester, amide, peptide and isopeptide bonds formed by the C-terminal Gly of ubiquitin (a 76-residue protein attached to proteins as an intracellular targeting signal).. In terms of biological role, hydrolase that can remove conjugated ubiquitin from proteins in vitro and may therefore play an important regulatory role at the level of protein turnover by preventing degradation. Cysteine protease with a preference for 'Lys-63' and 'Lys-48' -linked ubiquitin (UB) tetramers as substrates. Also cleaves RUB-GST fusion. In Arabidopsis thaliana (Mouse-ear cress), this protein is OVARIAN TUMOR DOMAIN-containing deubiquitinating enzyme 9.